We begin with the raw amino-acid sequence, 623 residues long: Glutathione import ATP-binding protein GsiA (623 aa).

ABC transporter domains lie at 15–269 (VSGL…QTLL) and 325–564 (LRSG…RKLM). Residues 49 to 56 (GESGSGKS) and 357 to 364 (GESGSGKS) contribute to the ATP site.

This sequence belongs to the ABC transporter superfamily. Glutathione importer (TC 3.A.1.5.11) family. In terms of assembly, the complex is composed of two ATP-binding proteins (GsiA), two transmembrane proteins (GsiC and GsiD) and a solute-binding protein (GsiB).

It localises to the cell inner membrane. It catalyses the reaction glutathione(out) + ATP + H2O = glutathione(in) + ADP + phosphate + H(+). Functionally, part of the ABC transporter complex GsiABCD involved in glutathione import. Responsible for energy coupling to the transport system. This is Glutathione import ATP-binding protein GsiA from Salmonella choleraesuis (strain SC-B67).